A 194-amino-acid polypeptide reads, in one-letter code: Protein cholesin (194 aa).

The segment at 1–83 (MAKQKRKVPE…RKKEERQRLR (83 aa)) is disordered. Serine 23 and serine 59 each carry phosphoserine. The span at 61–83 (EEQRVLERKLKKERKKEERQRLR) shows a compositional bias: basic and acidic residues. A phosphoserine mark is found at serine 97 and serine 175.

In terms of tissue distribution, secreted from the instestine, secretion is induced by feeding and cholesterol absorption.

Its subcellular location is the secreted. In terms of biological role, hormone secreted from the intestine in response to cholesterol, where it acts to inhibit cholesterol synthesis in the liver and VLDL secretion,leading to a reduction in circulating cholesterol levels. Acts through binding to its receptor, GPR146. The sequence is that of Protein cholesin from Homo sapiens (Human).